The following is a 351-amino-acid chain: 3-dehydroquinate synthase (351 aa).

NAD(+) is bound by residues 60–65 (DGEEYK), 94–98 (GVISD), 118–119 (TT), Lys-131, Lys-140, and 158–161 (FLKT). Residues Glu-173, His-239, and His-256 each contribute to the Zn(2+) site.

This sequence belongs to the sugar phosphate cyclases superfamily. Dehydroquinate synthase family. Requires NAD(+) as cofactor. Co(2+) serves as cofactor. It depends on Zn(2+) as a cofactor.

The protein resides in the cytoplasm. It catalyses the reaction 7-phospho-2-dehydro-3-deoxy-D-arabino-heptonate = 3-dehydroquinate + phosphate. It functions in the pathway metabolic intermediate biosynthesis; chorismate biosynthesis; chorismate from D-erythrose 4-phosphate and phosphoenolpyruvate: step 2/7. Catalyzes the conversion of 3-deoxy-D-arabino-heptulosonate 7-phosphate (DAHP) to dehydroquinate (DHQ). This Campylobacter jejuni subsp. jejuni serotype O:2 (strain ATCC 700819 / NCTC 11168) protein is 3-dehydroquinate synthase.